We begin with the raw amino-acid sequence, 200 residues long: Small ribosomal subunit protein eS1 (200 aa).

Belongs to the eukaryotic ribosomal protein eS1 family.

The polypeptide is Small ribosomal subunit protein eS1 (Thermococcus gammatolerans (strain DSM 15229 / JCM 11827 / EJ3)).